A 360-amino-acid polypeptide reads, in one-letter code: Cannabinoid receptor 2 (360 aa).

The Extracellular portion of the chain corresponds to 1-33 (MEECWVTEIANGSKDGLDSNPMKDYMILSGPQK). Asn-11 carries N-linked (GlcNAc...) asparagine glycosylation. Residues 34–59 (TAVAVLCTLLGLLSALENVAVLYLIL) traverse the membrane as a helical segment. The Cytoplasmic segment spans residues 60-71 (SSHQLRRKPSYL). The chain crosses the membrane as a helical span at residues 72-92 (FIGSLAGADFLASVVFACSFV). At 93–104 (NFHVFHGVDSKA) the chain is on the extracellular side. Residues 105 to 129 (VFLLKIGSVTMTFTASVGSLLLTAI) traverse the membrane as a helical segment. Topologically, residues 130-149 (DRYLCLRYPPSYKALLTRGR) are cytoplasmic. Residues 150–172 (ALVTLGIMWVLSALVSYLPLMGW) form a helical membrane-spanning segment. The Extracellular segment spans residues 173-188 (TCCPRPCSELFPLIPN). A helical transmembrane segment spans residues 189-214 (DYLLSWLLFIAFLFSGIIYTYGHVLW). Residues 215–246 (KAHQHVASLSGHQDRQVPGMARMRLDVRLAKT) lie on the Cytoplasmic side of the membrane. The chain crosses the membrane as a helical span at residues 247–267 (LGLVLAVLLICWFPVLALMAH). At 268–279 (SLATTLSDQVKK) the chain is on the extracellular side. Residues 280-301 (AFAFCSMLCLINSMVNPVIYAL) traverse the membrane as a helical segment. Residues 302–360 (RSGEIRSSAHHCLAHWKKCVRGLGSEAKEEAPRSSVTETEADGKITPWPDSRDLDLSDC) are Cytoplasmic-facing. The disordered stretch occupies residues 327–360 (EAKEEAPRSSVTETEADGKITPWPDSRDLDLSDC). Phosphoserine is present on residues Ser-335 and Ser-336. Phosphothreonine is present on Thr-338. Basic and acidic residues predominate over residues 351–360 (DSRDLDLSDC). Ser-352 is subject to Phosphoserine.

The protein belongs to the G-protein coupled receptor 1 family. Post-translationally, constitutively phosphorylated on Ser-352; phosphorylation increases cell internalization and desensitizes the receptor. Preferentially expressed in cells of the immune system with higher expression in B-cells and NK cells (at protein level). Expressed in skin in suprabasal layers and hair follicles (at protein level). Highly expressed in tonsil and to a lower extent in spleen, peripheral blood mononuclear cells, and thymus. PubMed:14657172 could not detect expression in normal brain. Expressed in brain by perivascular microglial cells and dorsal root ganglion sensory neurons (at protein level). Two isoforms are produced by alternative promoter usage and differ only in the 5' UTR: isoform CB2A is observed predominantly in testis with some expression in brain, while isoform CB2B is predominant in spleen and leukocytes.

The protein resides in the cell membrane. It localises to the cell projection. Its subcellular location is the dendrite. It is found in the perikaryon. Heterotrimeric G protein-coupled receptor for endocannabinoid 2-arachidonoylglycerol mediating inhibition of adenylate cyclase. May function in inflammatory response, nociceptive transmission and bone homeostasis. This is Cannabinoid receptor 2 (CNR2) from Homo sapiens (Human).